Reading from the N-terminus, the 110-residue chain is NADH-quinone oxidoreductase subunit K (110 aa).

A run of 3 helical transmembrane segments spans residues 13–33, 38–58, and 70–90; these read VTHGLIFSILLFVISVAGIII, ILILLMSIELMLLAVNTNFLI, and VFVFFIMAVAAAETAIGLAIV.

This sequence belongs to the complex I subunit 4L family. NDH-1 is composed of 14 different subunits. Subunits NuoA, H, J, K, L, M, N constitute the membrane sector of the complex.

It is found in the cell inner membrane. It carries out the reaction a quinone + NADH + 5 H(+)(in) = a quinol + NAD(+) + 4 H(+)(out). Functionally, NDH-1 shuttles electrons from NADH, via FMN and iron-sulfur (Fe-S) centers, to quinones in the respiratory chain. The immediate electron acceptor for the enzyme in this species is believed to be ubiquinone. Couples the redox reaction to proton translocation (for every two electrons transferred, four hydrogen ions are translocated across the cytoplasmic membrane), and thus conserves the redox energy in a proton gradient. This chain is NADH-quinone oxidoreductase subunit K, found in Francisella tularensis subsp. holarctica (strain FTNF002-00 / FTA).